We begin with the raw amino-acid sequence, 486 residues long: Carboxypeptidase Y homolog ARB_07161 (486 aa).

Positions 1 to 17 are cleaved as a signal peptide; the sequence is MKGLLSLLLVGAANALA. Asn111 carries N-linked (GlcNAc...) asparagine glycosylation. Ser241 is a catalytic residue. 3 disulfides stabilise this stretch: Cys281-Cys305, Cys288-Cys298, and Cys327-Cys334. Asp403 is a catalytic residue. Position 406 (Cys406) interacts with substrate. An N-linked (GlcNAc...) asparagine glycan is attached at Asn430. His462 is a catalytic residue.

It belongs to the peptidase S10 family.

The protein resides in the secreted. The catalysed reaction is Release of a C-terminal amino acid with broad specificity.. Involved in degradation of small peptides. This Arthroderma benhamiae (strain ATCC MYA-4681 / CBS 112371) (Trichophyton mentagrophytes) protein is Carboxypeptidase Y homolog ARB_07161.